A 562-amino-acid chain; its full sequence is Arginine--tRNA ligase (562 aa).

Residues 129 to 139 carry the 'HIGH' region motif; sequence ANPTGPLHVGH.

The protein belongs to the class-I aminoacyl-tRNA synthetase family. As to quaternary structure, monomer.

The protein resides in the cytoplasm. It catalyses the reaction tRNA(Arg) + L-arginine + ATP = L-arginyl-tRNA(Arg) + AMP + diphosphate. The sequence is that of Arginine--tRNA ligase from Xanthomonas campestris pv. campestris (strain B100).